Here is a 363-residue protein sequence, read N- to C-terminus: Adenosine deaminase (363 aa).

Residues histidine 42 and histidine 44 each contribute to the Zn(2+) site. A purine D-ribonucleoside-binding positions include 44–46, aspartate 172, and glycine 201; that span reads HLD. The gating helix loop; regulates binding affinity for substrates and thus substrate selectivity stretch occupies residues 170-184; that stretch reads IGDTGHEAANIKASA. Histidine 226 is a Zn(2+) binding site. The a purine D-ribonucleoside site is built by glutamate 229, histidine 253, and aspartate 310. Aspartate 310 contributes to the Zn(2+) binding site.

This sequence belongs to the metallo-dependent hydrolases superfamily. Adenosine and AMP deaminases family. Zn(2+) serves as cofactor.

It carries out the reaction adenosine + H2O + H(+) = inosine + NH4(+). It catalyses the reaction S-methyl-5'-thioadenosine + H2O + H(+) = S-methyl-5'-thioinosine + NH4(+). Its pathway is purine metabolism; purine nucleoside salvage. Inhibited by coformycin and methylthiocoformycin (MT-coformycin). In terms of biological role, catalyzes the hydrolytic deamination of adenosine to produce inosine. Unlike mammalian adenosine deaminases, also catalyzes the deamination of 5'-methylthioadenosine (MTA), a by-product of polyamine biosynthesis, to produce 5'-methylthioinosine (MTI). Plays an essential role in the purine salvage pathway which allows the parasite to use host cell purines for the synthesis of nucleic acids. This chain is Adenosine deaminase, found in Plasmodium vivax (strain Salvador I).